Reading from the N-terminus, the 180-residue chain is Superoxide dismutase [Cu-Zn] (180 aa).

The N-terminal stretch at 1–19 (MFMNLLTQVSNAIFPQVEA) is a signal peptide. 3 residues coordinate Cu cation: histidine 68, histidine 70, and histidine 85. Cysteine 79 and cysteine 171 are oxidised to a cystine. Zn(2+) contacts are provided by histidine 85, histidine 93, histidine 102, and aspartate 105. Residue histidine 142 participates in Cu cation binding.

It belongs to the Cu-Zn superoxide dismutase family. As to quaternary structure, homodimer. The cofactor is Cu cation. It depends on Zn(2+) as a cofactor.

Its subcellular location is the cytoplasm. The catalysed reaction is 2 superoxide + 2 H(+) = H2O2 + O2. Its activity is regulated as follows. The insertion of copper which activates the protein requires glutathione. This is independent of copper chaperone for SOD1 (CCS), which activates orthologs. Protects cells against oxidative stress by converting superoxide radicals to hydrogen peroxide. Required for normal brood size. May be involved in regulating mpk-1 phosphorylation downstream of phosphatase ptp-2 during oocyte maturation. This Caenorhabditis elegans protein is Superoxide dismutase [Cu-Zn] (sod-1).